We begin with the raw amino-acid sequence, 496 residues long: MDNKLIWLLPAIGLVVALQPSYIHPDEHFQTLEMLMIKFYGISGTVPWEFEPTNNARSYFPLYAFYGPLFYLMRDILKVQNPLNILRIIRFYNFMLYLSVLYYALPKLVNENKLQNKGRVNEALVFILSSYITWCYQCHSFSNSLETILLLLVLSNYTDILSNKAGLLQLVSTGFLISVGTFTRISFPAFLLLPSIQVFLKVLYRKWIQMVVIAVSMTLSTSIIVYFDTFMYESDEIIIAPLKNVVYNLNVDNLAKHGLHPRYTHLLVNIPLILGPGLLMIRNTKNDFLNLPLLSIISSLFFLSALRHQELRFLLPVVPLFSTLLTRFRYRPYLFRIWLVFNAAMCIIMGIFHQGGVIPMISNINAEQDLTIDIWWKTYSPPTWLYNNDILTVSTTSIVNNIENLDLVQFNVKTNHVVDLKGCDFDLVLEAIQNFRINGVKSLRLIVPNSMTSNVAALNQTYLVTKENSVFPHLDLDHLDSGIQNIIGLSEYKVSL.

Helical transmembrane passes span 5-25, 56-73, and 85-105; these read LIWL…YIHP, ARSY…FYLM, and ILRI…YYAL. N-linked (GlcNAc...) asparagine glycosylation is present at asparagine 156. A run of 6 helical transmembrane segments spans residues 174–194, 207–227, 261–281, 286–306, 311–328, and 337–357; these read GFLI…LLLP, WIQM…IVYF, PRYT…LLMI, NDFL…LSAL, LRFL…LTRF, and IWLV…QGGV. N-linked (GlcNAc...) asparagine glycosylation is present at asparagine 459.

It belongs to the glycosyltransferase 22 family. PIGZ subfamily.

The protein localises to the endoplasmic reticulum membrane. It participates in glycolipid biosynthesis; glycosylphosphatidylinositol-anchor biosynthesis. Alpha-1,2-mannosyltransferase involved in glycosylphosphatidylinositol-anchor biosynthesis. Transfers a fourth mannose to trimannosyl-GPIs during GPI precursor assembly. The presence of a fourth mannose in GPI is essential in fungi. The sequence is that of GPI mannosyltransferase 4 (SMP3) from Candida glabrata (strain ATCC 2001 / BCRC 20586 / JCM 3761 / NBRC 0622 / NRRL Y-65 / CBS 138) (Yeast).